The sequence spans 581 residues: MKENVASRAVFILLLFLNASLLNGQSPPGKPKIIKCRSPGKETFTCWWEPGSDGGLPTNYTLTYHKEGETLIHECPDYKTGGPNTCYFSKKHTSIWKIYVITVNAINQMGVSSSDPLYVDVTYIVEPEPPANLTLELKHPEDRKPYLWIKWFPPTLTDVKSGWFMIQYEIRLKPETAADWEIHFAAKQTQLKIFSLYPGQKYLVQVRCKPDHGYWSEWSPESSIQIPNDFPVNDTTVWIFVAVLSAVICLIMVWAVALKGYSMMTCILPPVPGPKIKGFDIHLLEKGKSEELLRALESQDFPPTSDCEDLLMEFIEVDDSEDQQLMPRPSKEHMEQGVKPMHMDPDSDSGRGSCDSPSLFSEKCDEPQAHPFKFYTPEDPEKLENPETNLTCLQAPQSTSREDKIPYFHANGPKSSTWPFPQPPSLHNPRYSYHNIADVCELALGMAGTTATLLDQTDQHALKPSKTIETGGEGKAAKQRESEGCSSKPDQDTGWPLPQDKTPLISAKPLEYVEIHKVSQDGVLALFPKQNEKVGAPETSKEYSKVSRVTDSNILVLVPDTQVQNLTLLEEPAKEAPPALP.

The N-terminal stretch at 1-24 is a signal peptide; the sequence is MKENVASRAVFILLLFLNASLLNG. At 25-234 the chain is on the extracellular side; that stretch reads QSPPGKPKII…QIPNDFPVND (210 aa). 2 Fibronectin type-III domains span residues 27–127 and 129–229; these read PPGK…IVEP and PPAN…IPND. C36 and C46 are disulfide-bonded. N59 carries an N-linked (GlcNAc...) asparagine glycan. C75 and C86 are disulfide-bonded. N132 carries N-linked (GlcNAc...) asparagine glycosylation. Residues D211 and H212 each contribute to the Zn(2+) site. Residues 215–219 carry the WSXWS motif motif; it reads WSEWS. N-linked (GlcNAc...) asparagine glycosylation occurs at N233. The chain crosses the membrane as a helical span at residues 235–258; it reads TTVWIFVAVLSAVICLIMVWAVAL. Over 259–581 the chain is Cytoplasmic; sequence KGYSMMTCIL…PAKEAPPALP (323 aa). The Box 1 motif motif lies at 267 to 275; sequence ILPPVPGPK. Disordered regions lie at residues 321-362 and 462-502; these read EDQQ…LFSE and LKPS…QDKT. Basic and acidic residues predominate over residues 329–349; sequence PSKEHMEQGVKPMHMDPDSDS.

Belongs to the type I cytokine receptor family. Type 1 subfamily. Interacts with SMARCA1. Interacts with NEK3 and VAV2 and this interaction is prolactin-dependent.

Its subcellular location is the membrane. In terms of biological role, this is a receptor for the anterior pituitary hormone prolactin. This is Prolactin receptor (PRLR) from Cervus elaphus (Red deer).